The chain runs to 442 residues: tRNA-2-methylthio-N(6)-dimethylallyladenosine synthase (442 aa).

Residues 6-122 enclose the MTTase N-terminal domain; it reads RKFYIHTFGC…LPVLIAEAGK (117 aa). Cys-15, Cys-51, Cys-85, Cys-157, Cys-161, and Cys-164 together coordinate [4Fe-4S] cluster. The 231-residue stretch at 143-373 folds into the Radical SAM core domain; that stretch reads RTQSLTAFVP…IDLQNGISAE (231 aa). In terms of domain architecture, TRAM spans 376 to 439; sequence RLAIGSVVEV…SATLIGRAAE (64 aa).

The protein belongs to the methylthiotransferase family. MiaB subfamily. In terms of assembly, monomer. The cofactor is [4Fe-4S] cluster.

The protein localises to the cytoplasm. The enzyme catalyses N(6)-dimethylallyladenosine(37) in tRNA + (sulfur carrier)-SH + AH2 + 2 S-adenosyl-L-methionine = 2-methylsulfanyl-N(6)-dimethylallyladenosine(37) in tRNA + (sulfur carrier)-H + 5'-deoxyadenosine + L-methionine + A + S-adenosyl-L-homocysteine + 2 H(+). Its function is as follows. Catalyzes the methylthiolation of N6-(dimethylallyl)adenosine (i(6)A), leading to the formation of 2-methylthio-N6-(dimethylallyl)adenosine (ms(2)i(6)A) at position 37 in tRNAs that read codons beginning with uridine. The sequence is that of tRNA-2-methylthio-N(6)-dimethylallyladenosine synthase from Chlorobium limicola (strain DSM 245 / NBRC 103803 / 6330).